A 62-amino-acid polypeptide reads, in one-letter code: Small ribosomal subunit protein eS27 (62 aa).

Residues C17, C20, C36, and C39 each coordinate Zn(2+). The segment at 17-39 (CPDCENEQIIFEKASTVVDCVVC) adopts a C4-type zinc-finger fold.

The protein belongs to the eukaryotic ribosomal protein eS27 family. In terms of assembly, part of the 30S ribosomal subunit. Requires Zn(2+) as cofactor.

The polypeptide is Small ribosomal subunit protein eS27 (Methanosphaerula palustris (strain ATCC BAA-1556 / DSM 19958 / E1-9c)).